Reading from the N-terminus, the 329-residue chain is Homeobox protein ceh-40 (329 aa).

Residues 3 to 186 (EASKSIMDLL…VIQLKKRYLD (184 aa)) form the PBC domain. Residues 10–90 (DLLSEVVKIT…EGVAGPDDSL (81 aa)) form a PBC-A region. The tract at residues 93–186 (IQEAAGTDQY…VIQLKKRYLD (94 aa)) is PBC-B. Residues 187-249 (ARRKRRNFSK…NKRIRYKKTM (63 aa)) constitute a DNA-binding region (homeobox; TALE-type). The segment at 248 to 275 (TMAKNEDERRENRKPEDRPPPGAPGAPY) is disordered. The span at 250 to 266 (AKNEDERRENRKPEDRP) shows a compositional bias: basic and acidic residues.

It belongs to the TALE/PBX homeobox family. As to expression, expressed in head dopaminergic neurons.

It localises to the nucleus. Plays a role in regulating gene expression in dopaminergic neurons, acting redundantly with homeobox protein ceh-20 in head neurons. May activate dopamine pathway genes in concert with ETS domain-containing protein ast-1, and homeobox proteins ceh-43 and ceh-20. The protein is Homeobox protein ceh-40 (ceh-40) of Caenorhabditis elegans.